A 131-amino-acid polypeptide reads, in one-letter code: Large ribosomal subunit protein bL19 (131 aa).

Belongs to the bacterial ribosomal protein bL19 family.

In terms of biological role, this protein is located at the 30S-50S ribosomal subunit interface and may play a role in the structure and function of the aminoacyl-tRNA binding site. The polypeptide is Large ribosomal subunit protein bL19 (Anaeromyxobacter dehalogenans (strain 2CP-C)).